Consider the following 400-residue polypeptide: Large envelope protein (400 aa).

At Met1 the chain carries N-acetylmethionine. The segment at 1-20 is disordered; the sequence is MGGWSAKPRKGMGTNLSVPN. Gly2 carries the N-myristoyl glycine; by host lipid modification. Positions 2–119 are pre-S1; sequence GGWSAKPRKG…PPLRDSHPQA (118 aa). The tract at residues 2-174 is pre-S; it reads GGWSAKPRKG…SSRTGDPALN (173 aa). At 2–181 the chain is on the virion surface; in external conformation side; sequence GGWSAKPRKG…ALNMENITSG (180 aa). Over 2–253 the chain is Intravirion; in internal conformation; that stretch reads GGWSAKPRKG…PGYRWMCLRR (252 aa). A glycan (N-linked (GlcNAc...) asparagine) is linked at Trp4. The pre-S2 stretch occupies residues 120–174; it reads MQWNSTAFQQALQDPRVRGLFFPAGGSSSGTVNPAPNIASHISSISSRTGDPALN. A helical membrane pass occupies residues 182-202; it reads FLGPLLVLQAGFFLLTRILTI. The Intravirion; in external conformation segment spans residues 203 to 253; it reads PQSLDSWWTSLNFLGGSPVCLGQNSQSPTSNHSPTSCPPICPGYRWMCLRR. Residues 254 to 274 form a helical membrane-spanning segment; sequence FIIFLFILLLCLIFLLVLLDY. At 275–348 the chain is on the virion surface side; sequence QGMLPVCPLI…WASVRFSWLS (74 aa). N-linked (GlcNAc...) asparagine; by host glycosylation is present at Asn320. A helical membrane pass occupies residues 349–369; it reads LLVPFVQWFVGLSPTVWLSVI. The Intravirion portion of the chain corresponds to 370 to 375; the sequence is WMMWYW. A helical membrane pass occupies residues 376–398; the sequence is GPSLYNILSPFIPLLPIFFCLWV. At 399–400 the chain is on the virion surface side; the sequence is YI.

The protein belongs to the orthohepadnavirus major surface antigen family. In its internal form (Li-HBsAg), interacts with the capsid protein and with the isoform S. Interacts with host chaperone CANX. In terms of assembly, associates with host chaperone CANX through its pre-S2 N glycan; this association may be essential for isoform M proper secretion. As to quaternary structure, interacts with isoform L. Interacts with the antigens of satellite virus HDV (HDVAgs); this interaction is required for encapsidation of HDV genomic RNA. Post-translationally, isoform M is N-terminally acetylated by host at a ratio of 90%, and N-glycosylated by host at the pre-S2 region. Myristoylated.

It localises to the virion membrane. The large envelope protein exists in two topological conformations, one which is termed 'external' or Le-HBsAg and the other 'internal' or Li-HBsAg. In its external conformation the protein attaches the virus to cell receptors and thereby initiating infection. This interaction determines the species specificity and liver tropism. This attachment induces virion internalization predominantly through caveolin-mediated endocytosis. The large envelope protein also assures fusion between virion membrane and endosomal membrane. In its internal conformation the protein plays a role in virion morphogenesis and mediates the contact with the nucleocapsid like a matrix protein. Its function is as follows. The middle envelope protein plays an important role in the budding of the virion. It is involved in the induction of budding in a nucleocapsid independent way. In this process the majority of envelope proteins bud to form subviral lipoprotein particles of 22 nm of diameter that do not contain a nucleocapsid. The chain is Large envelope protein from Hepatitis B virus genotype A1 subtype adw2 (isolate Southern-Africa/Cai) (HBV-A).